A 591-amino-acid chain; its full sequence is Glutathione S-transferase T2 (591 aa).

Positions 1–82 (MKLKVYADRM…YLSSAYASVV (82 aa)) constitute a GST N-terminal domain. Glutathione-binding positions include 11-12 (SQ), 40-41 (QL), 53-54 (KV), and 66-67 (ES). One can recognise a GST C-terminal domain in the interval 89 to 226 (DLSKRAKIHS…EVLFRAKDRF (138 aa)). The tract at residues 229-272 (QREMATASKPGPQSKIIQFSSIGGTSDGPNLVQDTTDRKARRRK) is disordered. Residues 243-262 (KIIQFSSIGGTSDGPNLVQD) show a composition bias toward polar residues. Positions 265–338 (DRKARRRKWS…HCRQRWRKIN (74 aa)) constitute a Myb-like domain.

The protein belongs to the GST superfamily. Theta family.

It is found in the peroxisome. It catalyses the reaction RX + glutathione = an S-substituted glutathione + a halide anion + H(+). Functionally, may be involved in the conjugation of reduced glutathione to a wide number of exogenous and endogenous hydrophobic electrophiles and have a detoxification role against certain herbicides. This chain is Glutathione S-transferase T2 (GSTT2), found in Arabidopsis thaliana (Mouse-ear cress).